A 288-amino-acid chain; its full sequence is MKFEFRTLVLISLAVVVVLSGCSQSPSSGGVPEYSGSKVYSAPTLYSQLIGVPTEGVSVKAYTVENANAKDILSWYKEKLSDYEIVNEMSVVQMTTPQGSAEWGAILFKKGDKGVGIWAMSGSGVEGGGAVYFIVEGPIDKLTGESGEAGGAGEQLPASDQASGEEPVKRYPGSVMLSYYKDTSNPLEVSIGIDYGTEDSAEKVAHWYKQELQAEGWVLESESSDDSSIDLAFSRGKEYIDIYIIEPYEGFLTRKLTSTTGRRGCHLTTWSVERSRWRGIPAQLCWNT.

A signal peptide spans 1-27; the sequence is MKFEFRTLVLISLAVVVVLSGCSQSPS. Positions 144–167 are disordered; that stretch reads GESGEAGGAGEQLPASDQASGEEP.

This is an uncharacterized protein from Archaeoglobus fulgidus (strain ATCC 49558 / DSM 4304 / JCM 9628 / NBRC 100126 / VC-16).